Reading from the N-terminus, the 364-residue chain is DNA replication and repair protein RecF (364 aa).

Position 30 to 37 (30 to 37) interacts with ATP; sequence GDNAQGKT.

The protein belongs to the RecF family.

The protein resides in the cytoplasm. In terms of biological role, the RecF protein is involved in DNA metabolism; it is required for DNA replication and normal SOS inducibility. RecF binds preferentially to single-stranded, linear DNA. It also seems to bind ATP. The polypeptide is DNA replication and repair protein RecF (Clostridium kluyveri (strain ATCC 8527 / DSM 555 / NBRC 12016 / NCIMB 10680 / K1)).